The chain runs to 738 residues: Squalene hopane cyclase afumA (738 aa).

PFTB repeat units follow at residues 132–173 and 321–361; these read GSQY…RIIG and RRRC…KLHD. The active-site Proton donor is the Asp-460. PFTB repeat units follow at residues 482-523, 581-621, and 634-675; these read VRDA…ESLC, CARA…QYFK, and AARA…SQTA.

Belongs to the terpene cyclase/mutase family.

The protein operates within secondary metabolite biosynthesis. Its function is as follows. Squalene hopane cyclase; part of the gene cluster that mediates the biosynthesis fumihopaside A, a hopane-type glucoside that enhances the thermotolerance and UV resistance of N.fumigata. The first step of fumihopaside A biosynthesis is performed by the squalene hopane cyclase afumA that catalyzes the cyclization of 3S-oxidosqualene into the hopene 21-beta-H-hopane-3-beta,22-diol. The cytochrome P450 monooxygenase afumB is responsible for both hydroxylation at C-24 and oxidations at C-30 of the afumA product. The glycosyltransferase afumC then catalyzes the glycosylation at C-24, using UDP-D-glucose as a donor, to produce fumihopaside A. AfumC is also able to accept UDP-D-galactose and UDP-D-glucuronic acid as donors to yield minor derivatives. Fumihopaside B, another minor derivative produced, is different from fumihopaside A due to the presence of a double bond between C-22 and C-29. This is Squalene hopane cyclase afumA from Aspergillus fumigatus (strain CBS 144.89 / FGSC A1163 / CEA10) (Neosartorya fumigata).